The primary structure comprises 120 residues: Large ribosomal subunit protein uL18 (120 aa).

The span at 1 to 20 (MKSTRKSATQRRHRRLRRHL) shows a compositional bias: basic residues. The disordered stretch occupies residues 1-26 (MKSTRKSATQRRHRRLRRHLSGTSER).

Belongs to the universal ribosomal protein uL18 family. In terms of assembly, part of the 50S ribosomal subunit; part of the 5S rRNA/L5/L18/L25 subcomplex. Contacts the 5S and 23S rRNAs.

In terms of biological role, this is one of the proteins that bind and probably mediate the attachment of the 5S RNA into the large ribosomal subunit, where it forms part of the central protuberance. The protein is Large ribosomal subunit protein uL18 of Synechocystis sp. (strain ATCC 27184 / PCC 6803 / Kazusa).